Here is a 380-residue protein sequence, read N- to C-terminus: Probable RAD2-like endonuclease 076L (380 aa).

The interval 1-101 is N-domain; it reads MGIKNLTQFL…QKIVSKTDAI (101 aa). Mg(2+) is bound by residues Asp32, Glu73, Glu191, Glu193, Asp212, Asp214, and Asp281. The segment at 156–301 is I-domain; it reads IDRRRKYEFS…EKAYKYISDY (146 aa).

It belongs to the XPG/RAD2 endonuclease family. Mg(2+) serves as cofactor.

The protein resides in the host nucleus. In terms of biological role, probable endonuclease. The sequence is that of Probable RAD2-like endonuclease 076L from Invertebrate iridescent virus 3 (IIV-3).